We begin with the raw amino-acid sequence, 124 residues long: Small ribosomal subunit protein uS12 (124 aa).

Aspartate 89 carries the 3-methylthioaspartic acid modification.

This sequence belongs to the universal ribosomal protein uS12 family. As to quaternary structure, part of the 30S ribosomal subunit. Contacts proteins S8 and S17. May interact with IF1 in the 30S initiation complex.

With S4 and S5 plays an important role in translational accuracy. Its function is as follows. Interacts with and stabilizes bases of the 16S rRNA that are involved in tRNA selection in the A site and with the mRNA backbone. Located at the interface of the 30S and 50S subunits, it traverses the body of the 30S subunit contacting proteins on the other side and probably holding the rRNA structure together. The combined cluster of proteins S8, S12 and S17 appears to hold together the shoulder and platform of the 30S subunit. The chain is Small ribosomal subunit protein uS12 from Glaesserella parasuis serovar 5 (strain SH0165) (Haemophilus parasuis).